The sequence spans 1058 residues: Carbamoyl phosphate synthase large chain (1058 aa).

Residues 1–401 (MPKRKDIQKI…SLLKACRSLE (401 aa)) form a carboxyphosphate synthetic domain region. Positions 129, 169, 175, 176, 208, 210, 215, 241, 242, 243, 284, and 298 each coordinate ATP. The ATP-grasp 1 domain occupies 133–327 (KQLMQELDQP…IAKLAAKIAV (195 aa)). Mg(2+) is bound by residues Gln284, Glu298, and Asn300. Gln284, Glu298, and Asn300 together coordinate Mn(2+). The segment at 402 to 546 (IGVCHNEMTS…YSTYELENES (145 aa)) is oligomerization domain. A carbamoyl phosphate synthetic domain region spans residues 547–929 (VQSNKESILV…ALYKAFEANN (383 aa)). Residues 671–861 (EKALKELGIP…MAQIATKLIL (191 aa)) enclose the ATP-grasp 2 domain. Arg707, Ser746, Ile748, Glu752, Gly777, Val778, His779, Ser780, Gln820, and Glu832 together coordinate ATP. Mg(2+) contacts are provided by Gln820, Glu832, and Asn834. Gln820, Glu832, and Asn834 together coordinate Mn(2+). In terms of domain architecture, MGS-like spans 930 to 1058 (SHLSEFGQIV…ESRCFNIEAI (129 aa)). The interval 930-1058 (SHLSEFGQIV…ESRCFNIEAI (129 aa)) is allosteric domain.

Belongs to the CarB family. As to quaternary structure, composed of two chains; the small (or glutamine) chain promotes the hydrolysis of glutamine to ammonia, which is used by the large (or ammonia) chain to synthesize carbamoyl phosphate. Tetramer of heterodimers (alpha,beta)4. It depends on Mg(2+) as a cofactor. Requires Mn(2+) as cofactor.

The catalysed reaction is hydrogencarbonate + L-glutamine + 2 ATP + H2O = carbamoyl phosphate + L-glutamate + 2 ADP + phosphate + 2 H(+). It carries out the reaction hydrogencarbonate + NH4(+) + 2 ATP = carbamoyl phosphate + 2 ADP + phosphate + 2 H(+). Its pathway is amino-acid biosynthesis; L-arginine biosynthesis; carbamoyl phosphate from bicarbonate: step 1/1. The protein operates within pyrimidine metabolism; UMP biosynthesis via de novo pathway; (S)-dihydroorotate from bicarbonate: step 1/3. Large subunit of the glutamine-dependent carbamoyl phosphate synthetase (CPSase). CPSase catalyzes the formation of carbamoyl phosphate from the ammonia moiety of glutamine, carbonate, and phosphate donated by ATP, constituting the first step of 2 biosynthetic pathways, one leading to arginine and/or urea and the other to pyrimidine nucleotides. The large subunit (synthetase) binds the substrates ammonia (free or transferred from glutamine from the small subunit), hydrogencarbonate and ATP and carries out an ATP-coupled ligase reaction, activating hydrogencarbonate by forming carboxy phosphate which reacts with ammonia to form carbamoyl phosphate. This is Carbamoyl phosphate synthase large chain from Streptococcus pyogenes serotype M49 (strain NZ131).